The following is a 321-amino-acid chain: Torsin-2A (321 aa).

A signal peptide spans 1-27 (MAVARHGCPPWGSILGLLVLALAAAAA). 93-100 (GWTGTGKS) provides a ligand contact to ATP. N-linked (GlcNAc...) asparagine glycosylation occurs at Asn-149.

This sequence belongs to the ClpA/ClpB family. Torsin subfamily. In terms of assembly, homohexamer. Interacts with TOR1AIP1.

It is found in the endoplasmic reticulum lumen. In Rattus norvegicus (Rat), this protein is Torsin-2A (Tor2a).